The sequence spans 227 residues: NAD(P)H-quinone oxidoreductase subunit K, chloroplastic (227 aa).

[4Fe-4S] cluster-binding residues include C43, C44, C108, and C139.

This sequence belongs to the complex I 20 kDa subunit family. In terms of assembly, NDH is composed of at least 16 different subunits, 5 of which are encoded in the nucleus. Requires [4Fe-4S] cluster as cofactor.

The protein localises to the plastid. The protein resides in the chloroplast thylakoid membrane. It carries out the reaction a plastoquinone + NADH + (n+1) H(+)(in) = a plastoquinol + NAD(+) + n H(+)(out). The enzyme catalyses a plastoquinone + NADPH + (n+1) H(+)(in) = a plastoquinol + NADP(+) + n H(+)(out). Its function is as follows. NDH shuttles electrons from NAD(P)H:plastoquinone, via FMN and iron-sulfur (Fe-S) centers, to quinones in the photosynthetic chain and possibly in a chloroplast respiratory chain. The immediate electron acceptor for the enzyme in this species is believed to be plastoquinone. Couples the redox reaction to proton translocation, and thus conserves the redox energy in a proton gradient. The sequence is that of NAD(P)H-quinone oxidoreductase subunit K, chloroplastic from Pelargonium hortorum (Common geranium).